Here is a 147-residue protein sequence, read N- to C-terminus: MKLHELKPAQGSTKAPKRLGRGIGSGTGKTSGKGHKGQKARAGGGVRPGFEGGQQPLARRMPKRGFTNIFKKEYVVLNVRDLEERFENGAVVGYESLFEVGLIKTIKDGVKILGTGELTKALTVQVDKVSQTAAEKIVAAGGKVEVE.

The interval 1-58 is disordered; the sequence is MKLHELKPAQGSTKAPKRLGRGIGSGTGKTSGKGHKGQKARAGGGVRPGFEGGQQPLA. 2 stretches are compositionally biased toward gly residues: residues 21-31 and 42-52; these read RGIGSGTGKTS and AGGGVRPGFEG.

Belongs to the universal ribosomal protein uL15 family. In terms of assembly, part of the 50S ribosomal subunit.

Functionally, binds to the 23S rRNA. The protein is Large ribosomal subunit protein uL15 of Desulfitobacterium hafniense (strain Y51).